A 519-amino-acid chain; its full sequence is Zinc finger and BTB domain-containing protein 18.3 (519 aa).

The BTB domain maps to 24–91 (CDCTVLVGDA…MYEGKLQFKD (68 aa)). The tract at residues 189–227 (ASIPQTGGEVDTHTTAAGKTADSPCSSTGSLSHRSATSM) is disordered. Polar residues predominate over residues 201–227 (HTTAAGKTADSPCSSTGSLSHRSATSM). C2H2-type zinc fingers lie at residues 367-389 (FMCP…LSTH), 407-429 (PTCS…ERTH), 435-457 (FTCT…AVVH), and 463-486 (HACK…RKFH).

This sequence belongs to the krueppel C2H2-type zinc-finger protein family. ZBTB18 subfamily.

It is found in the nucleus. In terms of biological role, transcriptional repressor that plays a role in various developmental processes. Specifically binds the consensus DNA sequence 5'-[AC]ACATCTG[GT][AC]-3' which contains the E box core, and acts by recruiting chromatin remodeling multiprotein complexes. In Xenopus laevis (African clawed frog), this protein is Zinc finger and BTB domain-containing protein 18.3 (zbtb18.3).